The following is a 312-amino-acid chain: Porphobilinogen deaminase (312 aa).

S-(dipyrrolylmethanemethyl)cysteine is present on cysteine 241.

It belongs to the HMBS family. As to quaternary structure, monomer. Dipyrromethane is required as a cofactor.

It catalyses the reaction 4 porphobilinogen + H2O = hydroxymethylbilane + 4 NH4(+). The protein operates within porphyrin-containing compound metabolism; protoporphyrin-IX biosynthesis; coproporphyrinogen-III from 5-aminolevulinate: step 2/4. Its pathway is porphyrin-containing compound metabolism; chlorophyll biosynthesis. Its function is as follows. Tetrapolymerization of the monopyrrole PBG into the hydroxymethylbilane pre-uroporphyrinogen in several discrete steps. The sequence is that of Porphobilinogen deaminase from Chlorobaculum tepidum (strain ATCC 49652 / DSM 12025 / NBRC 103806 / TLS) (Chlorobium tepidum).